The following is a 620-amino-acid chain: 1-deoxy-D-xylulose-5-phosphate synthase (620 aa).

Thiamine diphosphate contacts are provided by residues histidine 80 and 121-123; that span reads GHS. Aspartate 152 contributes to the Mg(2+) binding site. Residues 153–154, asparagine 181, tyrosine 288, and glutamate 370 each bind thiamine diphosphate; that span reads GA. Residue asparagine 181 participates in Mg(2+) binding.

The protein belongs to the transketolase family. DXPS subfamily. As to quaternary structure, homodimer. Mg(2+) serves as cofactor. It depends on thiamine diphosphate as a cofactor.

The enzyme catalyses D-glyceraldehyde 3-phosphate + pyruvate + H(+) = 1-deoxy-D-xylulose 5-phosphate + CO2. It functions in the pathway metabolic intermediate biosynthesis; 1-deoxy-D-xylulose 5-phosphate biosynthesis; 1-deoxy-D-xylulose 5-phosphate from D-glyceraldehyde 3-phosphate and pyruvate: step 1/1. In terms of biological role, catalyzes the acyloin condensation reaction between C atoms 2 and 3 of pyruvate and glyceraldehyde 3-phosphate to yield 1-deoxy-D-xylulose-5-phosphate (DXP). The polypeptide is 1-deoxy-D-xylulose-5-phosphate synthase (Escherichia coli (strain SMS-3-5 / SECEC)).